The primary structure comprises 299 residues: Ribosome-inactivating protein saporin-6 (299 aa).

The N-terminal stretch at 1-24 (MKIYVVATIAWILLQFSAWTTTDA) is a signal peptide. The active site involves Glu200. Positions 278 to 299 (SSNEANSTVRHYGPLKPTLLIT) are excised as a propeptide. Asn283 carries N-linked (GlcNAc...) asparagine glycosylation.

The protein belongs to the ribosome-inactivating protein family. Type 1 RIP subfamily. In terms of tissue distribution, seeds and leaves of the plant.

The catalysed reaction is Endohydrolysis of the N-glycosidic bond at one specific adenosine on the 28S rRNA.. Its function is as follows. Ribosome-inactivating protein of type 1, inhibits protein synthesis in animal cells. Useful as immunotoxin for pharmacological applications. The sequence is that of Ribosome-inactivating protein saporin-6 (SAP6) from Saponaria officinalis (Common soapwort).